Here is a 239-residue protein sequence, read N- to C-terminus: Phosphoribosylaminoimidazole-succinocarboxamide synthase (239 aa).

This sequence belongs to the SAICAR synthetase family.

It carries out the reaction 5-amino-1-(5-phospho-D-ribosyl)imidazole-4-carboxylate + L-aspartate + ATP = (2S)-2-[5-amino-1-(5-phospho-beta-D-ribosyl)imidazole-4-carboxamido]succinate + ADP + phosphate + 2 H(+). It participates in purine metabolism; IMP biosynthesis via de novo pathway; 5-amino-1-(5-phospho-D-ribosyl)imidazole-4-carboxamide from 5-amino-1-(5-phospho-D-ribosyl)imidazole-4-carboxylate: step 1/2. In Bacillus cereus (strain B4264), this protein is Phosphoribosylaminoimidazole-succinocarboxamide synthase.